The chain runs to 103 residues: Large ribosomal subunit protein bL21 (103 aa).

The protein belongs to the bacterial ribosomal protein bL21 family. In terms of assembly, part of the 50S ribosomal subunit. Contacts protein L20.

This protein binds to 23S rRNA in the presence of protein L20. The chain is Large ribosomal subunit protein bL21 from Hahella chejuensis (strain KCTC 2396).